The primary structure comprises 223 residues: Phosphoribosylformylglycinamidine synthase subunit PurQ (223 aa).

The 221-residue stretch at 3–223 folds into the Glutamine amidotransferase type-1 domain; the sequence is FAVLVFPGSN…MVKSWREQHV (221 aa). The active-site Nucleophile is cysteine 85. Residues histidine 193 and glutamate 195 contribute to the active site.

In terms of assembly, part of the FGAM synthase complex composed of 1 PurL, 1 PurQ and 2 PurS subunits.

The protein resides in the cytoplasm. It catalyses the reaction N(2)-formyl-N(1)-(5-phospho-beta-D-ribosyl)glycinamide + L-glutamine + ATP + H2O = 2-formamido-N(1)-(5-O-phospho-beta-D-ribosyl)acetamidine + L-glutamate + ADP + phosphate + H(+). It carries out the reaction L-glutamine + H2O = L-glutamate + NH4(+). Its pathway is purine metabolism; IMP biosynthesis via de novo pathway; 5-amino-1-(5-phospho-D-ribosyl)imidazole from N(2)-formyl-N(1)-(5-phospho-D-ribosyl)glycinamide: step 1/2. In terms of biological role, part of the phosphoribosylformylglycinamidine synthase complex involved in the purines biosynthetic pathway. Catalyzes the ATP-dependent conversion of formylglycinamide ribonucleotide (FGAR) and glutamine to yield formylglycinamidine ribonucleotide (FGAM) and glutamate. The FGAM synthase complex is composed of three subunits. PurQ produces an ammonia molecule by converting glutamine to glutamate. PurL transfers the ammonia molecule to FGAR to form FGAM in an ATP-dependent manner. PurS interacts with PurQ and PurL and is thought to assist in the transfer of the ammonia molecule from PurQ to PurL. The polypeptide is Phosphoribosylformylglycinamidine synthase subunit PurQ (Staphylococcus aureus (strain MSSA476)).